Consider the following 263-residue polypeptide: Proteasome subunit alpha type-1 (263 aa).

Position 1 is an N-acetylmethionine (M1). A Phosphoserine; alternate modification is found at S110. O-linked (GlcNAc) serine; alternate glycosylation is present at S110. K115 is covalently cross-linked (Glycyl lysine isopeptide (Lys-Gly) (interchain with G-Cter in ubiquitin)). Position 177 is a phosphoserine (S177). K208 is covalently cross-linked (Glycyl lysine isopeptide (Lys-Gly) (interchain with G-Cter in ubiquitin)). The interval 232–263 (FLEGLEERPQRKAQPTQPADEPAEKADEPMEH) is disordered. The segment covering 253–263 (PAEKADEPMEH) has biased composition (basic and acidic residues).

It belongs to the peptidase T1A family. The 26S proteasome consists of a 20S proteasome core and two 19S regulatory subunits. The 20S proteasome core is a barrel-shaped complex made of 28 subunits that are arranged in four stacked rings. The two outer rings are each formed by seven alpha subunits, and the two inner rings are formed by seven beta subunits. The proteolytic activity is exerted by three beta-subunits PSMB5, PSMB6 and PSMB7. Interacts with NOTCH3. Interacts with ZFAND1.

The protein resides in the cytoplasm. Its subcellular location is the nucleus. Component of the 20S core proteasome complex involved in the proteolytic degradation of most intracellular proteins. This complex plays numerous essential roles within the cell by associating with different regulatory particles. Associated with two 19S regulatory particles, forms the 26S proteasome and thus participates in the ATP-dependent degradation of ubiquitinated proteins. The 26S proteasome plays a key role in the maintenance of protein homeostasis by removing misfolded or damaged proteins that could impair cellular functions, and by removing proteins whose functions are no longer required. Associated with the PA200 or PA28, the 20S proteasome mediates ubiquitin-independent protein degradation. This type of proteolysis is required in several pathways including spermatogenesis (20S-PA200 complex) or generation of a subset of MHC class I-presented antigenic peptides (20S-PA28 complex). The chain is Proteasome subunit alpha type-1 (PSMA1) from Bos taurus (Bovine).